A 1221-amino-acid polypeptide reads, in one-letter code: Adhesion G-protein coupled receptor G6 (1221 aa).

A signal peptide spans 1-37 (MMFRSDRMWSCHWKWKPSPLLFLFALYIMCVPHSVWG). Over 38-862 (CANCRVVLSN…ASQLDARNTK (825 aa)) the chain is Extracellular. A disulfide bond links cysteine 41 and cysteine 67. A CUB domain is found at 41–149 (CRVVLSNPSG…KGFNASYIRV (109 aa)). Positions 89 and 97 each coordinate Ca(2+). Cysteine 94 and cysteine 111 are disulfide-bonded. Residue asparagine 121 is glycosylated (N-linked (GlcNAc...) asparagine). The Ca(2+) site is built by aspartate 134, serine 136, and isoleucine 137. Residues asparagine 143, asparagine 206, asparagine 258, asparagine 314, asparagine 324, asparagine 353, asparagine 438, asparagine 445, asparagine 452, asparagine 485, asparagine 488, and asparagine 505 are each glycosylated (N-linked (GlcNAc...) asparagine). Residues 154 to 356 (RNQKVILPQT…ALKAESNLSC (203 aa)) form the Pentraxin (PTX) domain. 2 disulfides stabilise this stretch: cysteine 186-cysteine 254 and cysteine 231-cysteine 277. Residues 473-837 (EPRLVLWALL…SDASETVCLC (365 aa)) form a mediates interaction with laminin-2 region. Cystine bridges form between cysteine 525/cysteine 560 and cysteine 548/cysteine 580. 12 N-linked (GlcNAc...) asparagine glycosylation sites follow: asparagine 563, asparagine 593, asparagine 600, asparagine 605, asparagine 667, asparagine 673, asparagine 695, asparagine 704, asparagine 750, asparagine 776, asparagine 811, and asparagine 818. The region spanning 670–853 (SHVNITTRNL…GVLMDLPRSA (184 aa)) is the GAIN-B domain. 2 disulfide bridges follow: cysteine 803-cysteine 835 and cysteine 822-cysteine 837. The segment at 803-853 (CAFWDLNKNKSFGGWNTSGCVAHRDSDASETVCLCNHFTHFGVLMDLPRSA) is GPS. The interval 842-850 (HFGVLMDLP) is stachel. A helical transmembrane segment spans residues 863–883 (VLTFISYIGCGISAIFSAATL). Residues 884–903 (LTYVAFEKLRRDYPSKILMN) are Cytoplasmic-facing. Residues 904–924 (LSTALLFLNLLFLLDGWITSF) form a helical membrane-spanning segment. Residues 925–929 (NVDGL) lie on the Extracellular side of the membrane. The helical transmembrane segment at 930–950 (CIAVAVLLHFFLLATFTWMGL) threads the bilayer. At 951–970 (EAIHMYIALVKVFNTYIRRY) the chain is on the cytoplasmic side. The chain crosses the membrane as a helical span at residues 971–991 (ILKFCIIGWGLPALVVSVVLA). The Extracellular portion of the chain corresponds to 992-1024 (SRNNNEVYGKESYGKEKGDEFCWIQDPVIFYVT). The chain crosses the membrane as a helical span at residues 1025–1045 (CAGYFGVMFFLNIAMFIVVMV). Topologically, residues 1046–1069 (QICGRNGKRSNRTLREEVLRNLRS) are cytoplasmic. A helical transmembrane segment spans residues 1070–1090 (VVSLTFLLGMTWGFAFFAWGP). At 1091–1092 (LN) the chain is on the extracellular side. A helical transmembrane segment spans residues 1093–1113 (IPFMYLFSIFNSLQGLFIFIF). 17alpha-hydroxyprogesterone is bound at residue asparagine 1103. Over 1114-1221 (HCAMKENVQK…GQVLVKTGPC (108 aa)) the chain is Cytoplasmic. Residues 1156-1176 (NLGKSLSSSSIGSNSTYLTSK) form a disordered region. Serine 1165 and serine 1168 each carry phosphoserine.

The protein belongs to the G-protein coupled receptor 2 family. Adhesion G-protein coupled receptor (ADGR) subfamily. In terms of assembly, heterodimer of 2 chains generated by proteolytic processing; the large extracellular N-terminal fragment and the membrane-bound C-terminal fragment predominantly remain associated and non-covalently linked. Interacts with Laminin-2; this interaction stabilizes the receptor in an inactive state. Laminin-2 polymerization could facilitate ADGRG6-NTF removal, thereby exposing the tethered agonist to drive myelination. Interacts with PRNP. Interacts with ITGB1. Interacts with LRP1. Post-translationally, proteolytically cleaved into 2 conserved sites: one in the GPS region of the GAIN-B domain (S1 site) and the other in the middle of the extracellular domain (S2 site). The proteolytic cleavage at S1 site generates an extracellular subunit and a seven-transmembrane subunit. Furin is involved in the cleavage of the S2 site generating a soluble fragment. Processing at the GPS region occurred independent of and probably prior to the cleavage at the S2 site. Proteolytic cleavage is required for activation of the receptor. In terms of processing, highly glycosylated. In terms of tissue distribution, expressed in placenta and to a lower extent in pancreas and liver. Detected in aortic endothelial cells but not in skin microvascular endothelial cells.

The protein resides in the cell membrane. With respect to regulation, forms a heterodimer of 2 chains generated by proteolytic processing that remain associated through non-covalent interactions mediated by the GAIN-B domain. In the inactivated receptor, the Stachel sequence (also named stalk) is embedded in the GAIN-B domain, where it adopts a beta-strand conformation. On activation, the Stachel moves into the 7 transmembrane region and adopts a twisted hook-shaped configuration that forms contacts within the receptor, leading to coupling of a G-alpha protein, which activates signaling. The cleaved GAIN-B and N-terminal domains can then dissociate from the rest of the receptor. Adhesion G-protein coupled receptor (aGPCR) for steroid hormones, such as progesterone and 17alpha-hydroxyprogesterone (17OHP). Involved in many biological processes, such as myelination, sprouting angiogenesis, placenta, ear and cartilage development. Ligand binding causes a conformation change that triggers signaling via guanine nucleotide-binding proteins (G proteins) and modulates the activity of downstream effectors, such as adenylate cyclase. ADGRG6 is coupled to G(i) G alpha proteins and mediates inhibition of adenylate cyclase. Also able to couple to G(q) G proteins. Involved in myelination of the peripheral nervous system: required for differentiation of promyelinating Schwann cells and for normal myelination of axons. Also acts as a regulator of body length and bone mass. Acts as a regulator of blood-brain barrier formation in the central nervous system vie its association with LRP1 and ITGB1. This Homo sapiens (Human) protein is Adhesion G-protein coupled receptor G6.